The sequence spans 700 residues: AP-2 complex subunit beta (700 aa).

The tract at residues 625–700 is disordered; that stretch reads VGNSFPPTGA…RKLSMKRPFS (76 aa). Phosphoserine is present on S649. T652 carries the phosphothreonine modification. Residues 653–663 show a composition bias toward basic and acidic residues; the sequence is AMMDDYDKPAE. S683 carries the post-translational modification Phosphoserine.

This sequence belongs to the adaptor complexes large subunit family. As to quaternary structure, adaptor protein complex 2 (AP-2) is a heterotetramer composed of two large adaptins (alpha-type subunit APL3 and beta-type subunit APL1), a medium chain (mu-type subunit APM4) and a small adaptin (sigma-type subunit APS2). Interacts with APS2.

It is found in the cell membrane. It localises to the membrane. The protein resides in the coated pit. Its function is as follows. Adaptins are components of the adaptor complexes which link clathrin to receptors in coated vesicles. Clathrin-associated protein complexes are believed to interact with the cytoplasmic tails of membrane proteins, leading to their selection and concentration. Beta adaptin is a subunit of the plasma membrane adaptor. In Saccharomyces cerevisiae (strain ATCC 204508 / S288c) (Baker's yeast), this protein is AP-2 complex subunit beta (APL1).